A 798-amino-acid polypeptide reads, in one-letter code: Penicillin-binding protein 1A (798 aa).

At 1–9 the chain is on the cytoplasmic side; sequence MIKKILTTC. The chain crosses the membrane as a helical; Signal-anchor for type II membrane protein span at residues 10 to 30; that stretch reads FGLVFGFCVFGVGLVAIAILV. At 31–798 the chain is on the periplasmic side; sequence TYPKLPSLDS…SKQQQLDSLF (768 aa). A transglycosylase region spans residues 50–218; it reads LTIYSADGEV…SAYNPIVNPE (169 aa). Catalysis depends on Glu-88, which acts as the Proton donor; for transglycosylase activity. The interval 378–700 is transpeptidase; it reads RRALGFAARA…GTIAVPVWVD (323 aa). Ser-461 (acyl-ester intermediate; for transpeptidase activity) is an active-site residue. The disordered stretch occupies residues 738–798; the sequence is GLTLDNSGIA…SKQQQLDSLF (61 aa). Residues 768-777 are compositionally biased toward basic and acidic residues; it reads AADDEVRQDM. Residues 783–798 are compositionally biased toward polar residues; sequence LPSNTGSKQQQLDSLF.

This sequence in the N-terminal section; belongs to the glycosyltransferase 51 family. The protein in the C-terminal section; belongs to the transpeptidase family.

The protein resides in the cell inner membrane. It catalyses the reaction [GlcNAc-(1-&gt;4)-Mur2Ac(oyl-L-Ala-gamma-D-Glu-L-Lys-D-Ala-D-Ala)](n)-di-trans,octa-cis-undecaprenyl diphosphate + beta-D-GlcNAc-(1-&gt;4)-Mur2Ac(oyl-L-Ala-gamma-D-Glu-L-Lys-D-Ala-D-Ala)-di-trans,octa-cis-undecaprenyl diphosphate = [GlcNAc-(1-&gt;4)-Mur2Ac(oyl-L-Ala-gamma-D-Glu-L-Lys-D-Ala-D-Ala)](n+1)-di-trans,octa-cis-undecaprenyl diphosphate + di-trans,octa-cis-undecaprenyl diphosphate + H(+). The catalysed reaction is Preferential cleavage: (Ac)2-L-Lys-D-Ala-|-D-Ala. Also transpeptidation of peptidyl-alanyl moieties that are N-acyl substituents of D-alanine.. It functions in the pathway cell wall biogenesis; peptidoglycan biosynthesis. In terms of biological role, cell wall formation. Synthesis of cross-linked peptidoglycan from the lipid intermediates. The enzyme has a penicillin-insensitive transglycosylase N-terminal domain (formation of linear glycan strands) and a penicillin-sensitive transpeptidase C-terminal domain (cross-linking of the peptide subunits). This Neisseria meningitidis serogroup A / serotype 4A (strain DSM 15465 / Z2491) protein is Penicillin-binding protein 1A (mrcA).